We begin with the raw amino-acid sequence, 283 residues long: Acetylglutamate kinase (283 aa).

Substrate-binding positions include 63–64, R85, and N178; that span reads GG.

It belongs to the acetylglutamate kinase family. ArgB subfamily.

It localises to the cytoplasm. The catalysed reaction is N-acetyl-L-glutamate + ATP = N-acetyl-L-glutamyl 5-phosphate + ADP. Its pathway is amino-acid biosynthesis; L-arginine biosynthesis; N(2)-acetyl-L-ornithine from L-glutamate: step 2/4. Functionally, catalyzes the ATP-dependent phosphorylation of N-acetyl-L-glutamate. The polypeptide is Acetylglutamate kinase (Prochlorococcus marinus (strain MIT 9515)).